Consider the following 315-residue polypeptide: Glutamyl-Q tRNA(Asp) synthetase (315 aa).

Residues 23–27 (RFAPS) and Glu-59 contribute to the L-glutamate site. A 'HIGH' region motif is present at residues 26 to 36 (PSPTGPLHIGS). Cys-115, Cys-117, Tyr-142, and Cys-146 together coordinate Zn(2+). 2 residues coordinate L-glutamate: Tyr-202 and Arg-220. Residues 258–262 (KLSKQ) carry the 'KMSKS' region motif. Lys-261 contacts ATP.

The protein belongs to the class-I aminoacyl-tRNA synthetase family. GluQ subfamily. It depends on Zn(2+) as a cofactor.

Its function is as follows. Catalyzes the tRNA-independent activation of glutamate in presence of ATP and the subsequent transfer of glutamate onto a tRNA(Asp). Glutamate is transferred on the 2-amino-5-(4,5-dihydroxy-2-cyclopenten-1-yl) moiety of the queuosine in the wobble position of the QUC anticodon. The protein is Glutamyl-Q tRNA(Asp) synthetase of Ralstonia nicotianae (strain ATCC BAA-1114 / GMI1000) (Ralstonia solanacearum).